A 265-amino-acid polypeptide reads, in one-letter code: Dehydrogenase RED2 (265 aa).

The chain crosses the membrane as a helical span at residues 6–26 (SFLLSKLFLCIALCTAYVAFS). N-linked (GlcNAc...) asparagine glycosylation occurs at Asn-45. Residues 47-67 (TSTVFGLTIVAIGLSALSSWL) traverse the membrane as a helical segment. Asn-74 is a glycosylation site (N-linked (GlcNAc...) asparagine). An NADP(+)-binding site is contributed by Val-89. Asn-127 carries an N-linked (GlcNAc...) asparagine glycan. NADP(+)-binding residues include Asp-136 and Asn-163. Residue Asn-176 is glycosylated (N-linked (GlcNAc...) asparagine). Ser-216 (proton donor) is an active-site residue. Residues Tyr-228 and Lys-232 each contribute to the NADP(+) site. The active-site Proton acceptor is the Tyr-228. Lys-232 serves as the catalytic Lowers pKa of active site Tyr.

This sequence belongs to the short-chain dehydrogenases/reductases (SDR) family.

The protein resides in the membrane. It catalyses the reaction a primary alcohol + NAD(+) = an aldehyde + NADH + H(+). The enzyme catalyses a secondary alcohol + NAD(+) = a ketone + NADH + H(+). The protein operates within mycotoxin biosynthesis. In terms of biological role, dehydrogenase; part of the Tox1B locus, one of the 2 loci that mediate the biosynthesis of T-toxin, a family of linear polyketides 37 to 45 carbons in length, of which the major component is 41 carbons, and which leads to high virulence to maize. One of the PKSs (PKS1 or PKS2) could synthesize a precursor, used subsequently by the other PKS as starter unit, to add additional carbons. Variability in the length of the final carbon backbone C35-47 could be achieved by varying the number of condensation cycles, or use of different starter or extender units or might be due to decarboxylation of the penultimate product, catalyzed by DEC1. Additional proteins are required for the biosynthesis of T-toxin, including oxidoreductases RED1, RED2, RED3, LAM1 and OXI1, as well as esterase TOX9. In Cochliobolus heterostrophus (strain C4 / ATCC 48331 / race T) (Southern corn leaf blight fungus), this protein is Dehydrogenase RED2.